The primary structure comprises 364 residues: tRNA N6-adenosine threonylcarbamoyltransferase (364 aa).

2 residues coordinate Fe cation: H115 and H119. Substrate contacts are provided by residues 137–141 (LVSGG), D170, G183, and N288. Residue D316 participates in Fe cation binding.

It belongs to the KAE1 / TsaD family. The cofactor is Fe(2+).

Its subcellular location is the cytoplasm. It catalyses the reaction L-threonylcarbamoyladenylate + adenosine(37) in tRNA = N(6)-L-threonylcarbamoyladenosine(37) in tRNA + AMP + H(+). Its function is as follows. Required for the formation of a threonylcarbamoyl group on adenosine at position 37 (t(6)A37) in tRNAs that read codons beginning with adenine. Is involved in the transfer of the threonylcarbamoyl moiety of threonylcarbamoyl-AMP (TC-AMP) to the N6 group of A37, together with TsaE and TsaB. TsaD likely plays a direct catalytic role in this reaction. The chain is tRNA N6-adenosine threonylcarbamoyltransferase from Bartonella tribocorum (strain CIP 105476 / IBS 506).